An 89-amino-acid polypeptide reads, in one-letter code: Small ribosomal subunit protein uS14 (89 aa).

Residues C52, C55, C68, and C71 each contribute to the Zn(2+) site.

It belongs to the universal ribosomal protein uS14 family. Part of the 30S ribosomal subunit. Contacts proteins S3 and S10. Zn(2+) serves as cofactor.

Its function is as follows. Binds 16S rRNA, required for the assembly of 30S particles and may also be responsible for determining the conformation of the 16S rRNA at the A site. This is Small ribosomal subunit protein uS14 (rpsN) from Salinibacter ruber (strain DSM 13855 / M31).